The following is a 472-amino-acid chain: Putative cytochrome P450 135B1 (472 aa).

Cys388 provides a ligand contact to heme. Positions 442–472 (RDVSATSQATAQGAGCPAARGGGPSRAVGSQ) are disordered. A compositionally biased stretch (low complexity) spans 452–472 (AQGAGCPAARGGGPSRAVGSQ).

This sequence belongs to the cytochrome P450 family. It depends on heme as a cofactor.

The protein is Putative cytochrome P450 135B1 (cyp135B1) of Mycobacterium bovis (strain ATCC BAA-935 / AF2122/97).